The chain runs to 316 residues: MST50-interacting protein 11 (316 aa).

7 WD repeats span residues 13 to 53 (GHNG…TSYG), 61 to 100 (GHSH…TTRR), 103 to 142 (GHTN…KYTI), 146 to 187 (GHSE…LQTD), 190 to 229 (GHTG…HLYS), 231 to 269 (NAND…KVDE), and 281 to 316 (SREP…MSRA).

The protein belongs to the WD repeat G protein beta family. Ribosomal protein RACK1 subfamily. Interacts with MST50 and MCK1.

Functionally, involved in regulating the cell wall integrity and MPS1 activation via its interaction with the MAPKKK MCK1. In Pyricularia oryzae (strain 70-15 / ATCC MYA-4617 / FGSC 8958) (Rice blast fungus), this protein is MST50-interacting protein 11.